A 396-amino-acid chain; its full sequence is MAAPIDTFLFTSESVNEGHPDKMCDQISDAVLDACLAQDPESKVACETCTKTNLVMVFGEITTKGNVDYEKIVRQTCRDIGFVSADVGLDADNCKVLVYIEQQSPDIAQGVHGHLTKRPEEIGAGDQGHMFGYATDETPELMPLSHVLATKLGARLTEVRKNGTCPWLRPDGKTQVTVEYYNDNGAMVPIRVHTVLISTQHDETVTNDEIAADLKEHVIKPVIPEKYLDEKTIFHLNPSGRFVIGGPHGDAGLTGRKIIIDTYGGWGAHGGGAFSGKDPTKVDRSGAYIARQAAKSIVASGLARRCIVQISYAIGVPEPLSVFVDTYGTGKIPDKDILKIVKETFDFRPGMIAINLDLLKGGSRYLKTAAYGHFGRDDPDFTWEVVKPLKWDKPQA.

Glu13 contacts Mg(2+). Residue His19 coordinates ATP. Residue Glu47 coordinates K(+). The L-methionine site is built by Glu60 and Gln103. ATP-binding positions include 171–173 (DGK), 239–242 (SGRF), Asp250, 256–257 (RK), Ala273, Lys277, and Lys281. Asp250 contacts L-methionine. Lys281 is a binding site for L-methionine.

The protein belongs to the AdoMet synthase family. As to quaternary structure, homotetramer. It depends on Mn(2+) as a cofactor. Mg(2+) serves as cofactor. Co(2+) is required as a cofactor. Requires K(+) as cofactor.

The protein localises to the cytoplasm. The enzyme catalyses L-methionine + ATP + H2O = S-adenosyl-L-methionine + phosphate + diphosphate. Its pathway is amino-acid biosynthesis; S-adenosyl-L-methionine biosynthesis; S-adenosyl-L-methionine from L-methionine: step 1/1. Functionally, catalyzes the formation of S-adenosylmethionine from methionine and ATP. The reaction comprises two steps that are both catalyzed by the same enzyme: formation of S-adenosylmethionine (AdoMet) and triphosphate, and subsequent hydrolysis of the triphosphate. May be involved in the synthesis of betain in response to abiotic stress such as high salinity. This is S-adenosylmethionine synthase 1 (SAMS1) from Beta vulgaris (Sugar beet).